The following is a 274-amino-acid chain: Large ribosomal subunit protein uL2 (274 aa).

Disordered stretches follow at residues 36–61 (QKSK…HKQR) and 223–274 (VAMN…RRKR). A compositionally biased stretch (polar residues) spans 37–46 (KSKTGGRNSN). Composition is skewed to basic residues over residues 50–61 (TTRHRGGGHKQR) and 254–274 (KGHK…RRKR).

This sequence belongs to the universal ribosomal protein uL2 family. In terms of assembly, part of the 50S ribosomal subunit. Forms a bridge to the 30S subunit in the 70S ribosome.

Its function is as follows. One of the primary rRNA binding proteins. Required for association of the 30S and 50S subunits to form the 70S ribosome, for tRNA binding and peptide bond formation. It has been suggested to have peptidyltransferase activity; this is somewhat controversial. Makes several contacts with the 16S rRNA in the 70S ribosome. The polypeptide is Large ribosomal subunit protein uL2 (Halorhodospira halophila (strain DSM 244 / SL1) (Ectothiorhodospira halophila (strain DSM 244 / SL1))).